Consider the following 142-residue polypeptide: Large-conductance mechanosensitive channel (142 aa).

A run of 3 helical transmembrane segments spans residues 15-35, 38-58, and 82-102; these read AFVM…GAAF, IVTS…IGNI, and GMFI…FVAI.

This sequence belongs to the MscL family. In terms of assembly, homopentamer.

The protein resides in the cell inner membrane. Its function is as follows. Channel that opens in response to stretch forces in the membrane lipid bilayer. May participate in the regulation of osmotic pressure changes within the cell. The sequence is that of Large-conductance mechanosensitive channel from Fusobacterium nucleatum subsp. nucleatum (strain ATCC 25586 / DSM 15643 / BCRC 10681 / CIP 101130 / JCM 8532 / KCTC 2640 / LMG 13131 / VPI 4355).